A 264-amino-acid chain; its full sequence is Type 1 encapsulin shell protein (264 aa).

Belongs to the encapsulin family. Family 1 subfamily. In terms of assembly, forms hollow shells composed of 60 subunits. Monomers probably form pentamers which assemble into the shell. There are 12 pores where the pentamers meet as well as 3-fold axis channels and dimer channels; none are larger than 3-4 Angstroms in diameter. The N-terminus of the protein is inside the shell, the C-terminus is outside.

The protein resides in the encapsulin nanocompartment. Functionally, shell component of a type 1 encapsulin nanocompartment. Assembles into proteinaceous shells 21-24 nm in diameter. Empty organelles can be expressed in E.coli. Cargo proteins (DypB) are targeted to the interior via their C-terminal extensions. In Rhodococcus erythropolis (strain PR4 / NBRC 100887), this protein is Type 1 encapsulin shell protein.